A 269-amino-acid polypeptide reads, in one-letter code: Alcohol dehydrogenase-related 31 kDa protein (269 aa).

11-34 provides a ligand contact to NAD(+); it reads YVADCGGIALETCKVLMTKNIAKL. Serine 139 provides a ligand contact to substrate. Tyrosine 152 acts as the Proton acceptor in catalysis.

Belongs to the short-chain dehydrogenases/reductases (SDR) family.

The protein is Alcohol dehydrogenase-related 31 kDa protein (Adhr) of Drosophila lebanonensis (Fruit fly).